The chain runs to 1308 residues: Contactin-associated protein-like 4 (1308 aa).

Positions 1–25 are cleaved as a signal peptide; that stretch reads MGSVTGAVLKTLLLLSTQNWNRVEA. Topologically, residues 26-1241 are extracellular; sequence GNSYDCDDPL…LANAIKSDSA (1216 aa). The F5/8 type C domain maps to 31–177; that stretch reads CDDPLVSALP…IGMRIEVFGC (147 aa). Cys-31 and Cys-177 are joined by a disulfide. Laminin G-like domains are found at residues 212–364 and 398–547; these read FKTM…SFSC and FRTW…IDSC. Asn-260, Asn-285, Asn-359, and Asn-538 each carry an N-linked (GlcNAc...) asparagine glycan. Disulfide bonds link Cys-332–Cys-364, Cys-515–Cys-547, Cys-553–Cys-564, and Cys-558–Cys-573. In terms of domain architecture, EGF-like 1 spans 549 to 586; it reads ISDRCLPNYCEHGGECSQSWSTFHCNCTNTGYRGATCH. N-linked (GlcNAc...) asparagine glycosylation occurs at Asn-574. Cys-575 and Cys-585 are joined by a disulfide. The region spanning 587 to 792 is the Fibrinogen C-terminal domain; the sequence is NSIYEQSCEA…LLCQGDRSFW (206 aa). Residues Asn-602, Asn-625, Asn-637, Asn-706, and Asn-748 are each glycosylated (N-linked (GlcNAc...) asparagine). Positions 793-957 constitute a Laminin G-like 3 domain; sequence NSASFDTEAS…AQVTPEVQPG (165 aa). Cystine bridges form between Cys-931–Cys-958, Cys-962–Cys-975, Cys-969–Cys-984, and Cys-986–Cys-996. In terms of domain architecture, EGF-like 2 spans 958-997; it reads CRGHCSSYGKLCRNGGKCRERPIGFFCDCTFSAYTGPFCS. 2 N-linked (GlcNAc...) asparagine glycosylation sites follow: Asn-1023 and Asn-1073. Residues 1046 to 1202 enclose the Laminin G-like 4 domain; that stretch reads FRTTRTPSLL…VTGHVTESSC (157 aa). Cys-1167 and Cys-1202 form a disulfide bridge. Residues 1242-1262 form a helical membrane-spanning segment; that stretch reads VIGGLIAVVIFILLCITAIAV. The Cytoplasmic segment spans residues 1263–1308; it reads RIYQQKRLYKRSEAKRSENVDSAEAVLKSELNIQNAVNENQKEYFF.

Belongs to the neurexin family. In terms of assembly, interacts with TIAM1.

It is found in the presynaptic cell membrane. In terms of biological role, presynaptic protein involved in both dopaminergic synaptic transmission and GABAergic system, thereby participating in the structural maturation of inhibitory interneuron synapses. Involved in the dopaminergic synaptic transmission by attenuating dopamine release through a presynaptic mechanism. Also participates in the GABAergic system. This Homo sapiens (Human) protein is Contactin-associated protein-like 4 (CNTNAP4).